The following is a 996-amino-acid chain: MQSTDLGNKESGKIWHRKPSPATHDGIIVNIVHSTSEYHPKVLRFLNVAFDGSGDSFIAGDHQGNIYVFDLHGNRFNLVQRTAQACTALAFNLRRKSEFLVALADYSIKCFDTVTKELVSWMRGHESSVCSISVHASGRYAITTSSDTAQLWDLDTFQRKRKLNIRQSVGIQKVFFLPLSNTILSCFKDNSIFAWECDTLFCKYQLPGPPEGSNILYKVFAVTRDGRILAAGGKSNHLHLWCLEATGLFRIIQMPAKVRAVRHLEFLPDSFDAGSNQVLGVLSQDGIMRFVNIQTCKLLFEIGTVEEGISSSVISPHGRYIASIMENGSLNVYSVQALTQEINKPPPPLVKVIEDLPSNTVSSSNLKMKIMPGRVQRPARCKESKIPTRVLKQDLTGDLENKENELSEGLNKKRLQILLKGYGEYPTKYRMFIWRSLLQLPENHTAFSSLVDKGTHAAYLSLQKKYPIKSRKLLRVLQRTLSALAHWSAIFSDTPYLPLLAFPFVKLFQNNQLICFEVVATLIINWCQHWFEYFPNPPINILSMIENVLAFHDKELLQHFIDRDITSQVYAWPLLETLFSEVLTREEWLRLFDNIFSNHPSFLLMTVVAYSTCSRAPLLNCTLKNDFEYFFHHRNNLDINVVIREVYHLMETTPADIHPNSMLDAFVALTKGQYPIFNQYPKFIVDYQTREWERIRNDELDFLRERQTVENMQAEVDEQRAKDEAWYQKQELLRRAEETRREILLQEEEKMAQQRQRLAAVKRELEIKEIHLQDAARRRLLKLQQDQREMELRRLEDEIERKVQMRDQEIAATAKDLEIRQLELEAQKRLYEKDLTTSQEAVAKEIREDTDAHRRKAALEEHMFQKLLENSQMGGRRAQRWKEAEEKEFHLQSAKKASALSDASRKWFLRQETSAALEHEEMPWLQRQYMDSAYLPQTSRLHDVSDMDPSTHIFSRNYPTEWNHMEHDLLKNVRDLRRRLTARARNSCRHPHLLVT.

7 WD repeats span residues 33 to 74 (HSTS…LHGN), 75 to 116 (RFNL…TVTK), 117 to 157 (ELVS…LDTF), 158 to 200 (QRKR…CDTL), 201 to 248 (FCKY…ATGL), 249 to 296 (FRII…IQTC), and 297 to 334 (KLLF…NVYS). The stretch at 388 to 414 (TRVLKQDLTGDLENKENELSEGLNKKR) forms a coiled coil. The region spanning 424–599 (EYPTKYRMFI…RLFDNIFSNH (176 aa)) is the Rab-GAP TBC domain. Residues 699 to 844 (ELDFLRERQT…LTTSQEAVAK (146 aa)) adopt a coiled-coil conformation. The tract at residues 983–986 (RARN) is mediates direct interaction with PJA2.

Interacts with PJA2; the interaction is direct and recruits PJA2 to centrosomes. Interacts with OFD1; regulates its activity in cilium assembly. Interacts with PRKACA.

It localises to the cytoplasm. The protein localises to the cytoskeleton. The protein resides in the microtubule organizing center. Its subcellular location is the centrosome. It is found in the centriolar satellite. It localises to the cilium basal body. In terms of biological role, molecular adapter which is involved in cilium biogenesis. Part of a functional complex including OFD1 a centriolar protein involved in cilium assembly. Could regulate the cAMP-dependent phosphorylation of OFD1, and its subsequent ubiquitination by PJA2 which ultimately leads to its proteasomal degradation. The chain is TBC1 domain family member 31 from Mus musculus (Mouse).